The primary structure comprises 215 residues: Somatotropin (215 aa).

An N-terminal signal peptide occupies residues 1 to 25 (MAPGMRVCLLLLIAFTLLGPQRAAA). Histidine 44 contributes to the Zn(2+) binding site. The residue at position 130 (serine 130) is a Phosphoserine. A Zn(2+)-binding site is contributed by glutamate 197.

Belongs to the somatotropin/prolactin family.

Its subcellular location is the secreted. Functionally, plays an important role in growth control. Its major role in stimulating body growth is to stimulate the liver and other tissues to secrete IGF1. It stimulates both the differentiation and proliferation of myoblasts. It also stimulates amino acid uptake and protein synthesis in muscle and other tissues. The chain is Somatotropin (GH1) from Monodelphis domestica (Gray short-tailed opossum).